Here is a 350-residue protein sequence, read N- to C-terminus: Deoxyribonuclease-2-alpha (350 aa).

The first 19 residues, 1-19 (MAAPSSLLLAALLWVPAEA), serve as a signal peptide directing secretion. A disulfide bond links cysteine 22 and cysteine 162. N-linked (GlcNAc...) asparagine glycosylation is found at asparagine 89, asparagine 215, asparagine 269, and asparagine 293. 2 disulfide bridges follow: cysteine 270–cysteine 350 and cysteine 311–cysteine 330. Residue histidine 298 is part of the active site.

This sequence belongs to the DNase II family. In terms of tissue distribution, ubiquitous.

It is found in the lysosome. It carries out the reaction Endonucleolytic cleavage to nucleoside 3'-phosphates and 3'-phosphooligonucleotide end-products.. In terms of biological role, hydrolyzes DNA under acidic conditions with a preference for double-stranded DNA. Plays a major role in the clearance of nucleic acids generated through apoptosis, hence preventing autoinflammation. Necessary for proper fetal development and for definitive erythropoiesis in fetal liver and bone marrow, where it degrades nuclear DNA expelled from erythroid precursor cells. In Rattus norvegicus (Rat), this protein is Deoxyribonuclease-2-alpha (Dnase2).